Consider the following 449-residue polypeptide: UDP-N-acetylmuramoylalanine--D-glutamate ligase (449 aa).

An ATP-binding site is contributed by 118 to 124 (GSNGKTT).

This sequence belongs to the MurCDEF family.

The protein localises to the cytoplasm. It carries out the reaction UDP-N-acetyl-alpha-D-muramoyl-L-alanine + D-glutamate + ATP = UDP-N-acetyl-alpha-D-muramoyl-L-alanyl-D-glutamate + ADP + phosphate + H(+). The protein operates within cell wall biogenesis; peptidoglycan biosynthesis. Its function is as follows. Cell wall formation. Catalyzes the addition of glutamate to the nucleotide precursor UDP-N-acetylmuramoyl-L-alanine (UMA). This is UDP-N-acetylmuramoylalanine--D-glutamate ligase from Leuconostoc mesenteroides subsp. mesenteroides (strain ATCC 8293 / DSM 20343 / BCRC 11652 / CCM 1803 / JCM 6124 / NCDO 523 / NBRC 100496 / NCIMB 8023 / NCTC 12954 / NRRL B-1118 / 37Y).